A 255-amino-acid polypeptide reads, in one-letter code: Flap endonuclease Xni (255 aa).

Mg(2+) is bound at residue D105. One can recognise a 5'-3' exonuclease domain in the interval 162-253 (EHSQFIDYLA…NLSQFRLPNP (92 aa)). 5 residues coordinate K(+): L172, A173, P181, V183, and I186. The tract at residues 185–190 (GIGPKS) is interaction with DNA.

Belongs to the Xni family. Requires Mg(2+) as cofactor. The cofactor is K(+).

Has flap endonuclease activity. During DNA replication, flap endonucleases cleave the 5'-overhanging flap structure that is generated by displacement synthesis when DNA polymerase encounters the 5'-end of a downstream Okazaki fragment. This is Flap endonuclease Xni from Shewanella sediminis (strain HAW-EB3).